Here is a 1774-residue protein sequence, read N- to C-terminus: U3 small nucleolar RNA-associated protein 10 (1774 aa).

The segment at 1209-1228 is disordered; that stretch reads TEQGKSDGDESGSEPDNDNP. The stretch at 1734–1772 is one HEAT repeat; sequence LVPVIAELLEDDDEEVEQEVRTGLVKVVETVLGEPFDRY.

This sequence belongs to the HEATR1/UTP10 family. In terms of assembly, component of the ribosomal small subunit (SSU) processome.

Its subcellular location is the nucleus. The protein resides in the nucleolus. Functionally, involved in nucleolar processing of pre-18S ribosomal RNA. Involved in ribosome biosynthesis. The chain is U3 small nucleolar RNA-associated protein 10 from Eremothecium gossypii (strain ATCC 10895 / CBS 109.51 / FGSC 9923 / NRRL Y-1056) (Yeast).